Reading from the N-terminus, the 137-residue chain is FAD synthase (137 aa).

ATP is bound by residues 5 to 6 (TF), 10 to 13 (HPGH), and Asp-88.

The protein belongs to the archaeal FAD synthase family. Homodimer. Requires a divalent metal cation as cofactor.

It catalyses the reaction FMN + ATP + H(+) = FAD + diphosphate. It participates in cofactor biosynthesis; FAD biosynthesis; FAD from FMN: step 1/1. Catalyzes the transfer of the AMP portion of ATP to flavin mononucleotide (FMN) to produce flavin adenine dinucleotide (FAD) coenzyme. The polypeptide is FAD synthase (Archaeoglobus fulgidus (strain ATCC 49558 / DSM 4304 / JCM 9628 / NBRC 100126 / VC-16)).